The primary structure comprises 217 residues: MSKALRTLALSGLVLVGLSACVSVPRGQGSGAAVVEQISDSARQGEAARQAWLQQHPNWSFQGRVAISKDRNGGSGRIDWQQDGPRYRVQLSAPVTRQSWVLTGDTTTGAGRLEGLDGGPRSGSDAEKVLLEATGWTIPVNQMPDWVRALRIADAGAARVELDAAGRPRTVQQDGWTIDFLAWTPASADQPELPQRIEARYGEAKVRLLVDQWTVSP.

An N-terminal signal peptide occupies residues 1-20 (MSKALRTLALSGLVLVGLSA). Cys-21 carries the N-palmitoyl cysteine lipid modification. The S-diacylglycerol cysteine moiety is linked to residue Cys-21.

Belongs to the LolB family. Monomer.

It localises to the cell outer membrane. In terms of biological role, plays a critical role in the incorporation of lipoproteins in the outer membrane after they are released by the LolA protein. The chain is Outer-membrane lipoprotein LolB from Xanthomonas oryzae pv. oryzae (strain MAFF 311018).